A 370-amino-acid polypeptide reads, in one-letter code: Putrescine-binding periplasmic protein PotF (370 aa).

A signal peptide spans 1–26 (MTALNKKWLSGLVAGALMAVSVGTLA). Serine 38 lines the putrescine pocket. An intrachain disulfide couples cysteine 175 to cysteine 239. Putrescine-binding residues include aspartate 247 and aspartate 278.

The protein belongs to the bacterial solute-binding protein PotD/PotF family. As to quaternary structure, the complex is composed of two ATP-binding proteins (PotG), two transmembrane proteins (PotH and PotI) and a solute-binding protein (PotF).

It localises to the periplasm. Transport is feedback inhibited by intracellular polyamines. Part of the ABC transporter complex PotFGHI involved in putrescine uptake. Binds putrescine. Imports putrescine for maintenance of the optimal concentration of polyamines necessary for cell growth in the presence of glucose. In Escherichia coli (strain K12), this protein is Putrescine-binding periplasmic protein PotF.